Here is a 150-residue protein sequence, read N- to C-terminus: Transcriptional repressor NrdR (150 aa).

A zinc finger lies at 3–34 (CPFCHHPQSRVIDSRTVENGFVTRRRRQCTKC). The ATP-cone domain occupies 46-136 (LLVEKRNGVT…VYKSFSSMED (91 aa)).

The protein belongs to the NrdR family. Zn(2+) serves as cofactor.

In terms of biological role, negatively regulates transcription of bacterial ribonucleotide reductase nrd genes and operons by binding to NrdR-boxes. The protein is Transcriptional repressor NrdR of Corynebacterium kroppenstedtii (strain DSM 44385 / JCM 11950 / CIP 105744 / CCUG 35717).